The primary structure comprises 133 residues: Large ribosomal subunit protein bL17 (133 aa).

Belongs to the bacterial ribosomal protein bL17 family. Part of the 50S ribosomal subunit. Contacts protein L32.

The chain is Large ribosomal subunit protein bL17 from Thermodesulfovibrio yellowstonii (strain ATCC 51303 / DSM 11347 / YP87).